The primary structure comprises 635 residues: Phosphomethylpyrimidine synthase (635 aa).

The segment covering 1–14 (MNATVSSAVQSSLP) has biased composition (polar residues). Residues 1–41 (MNATVSSAVQSSLPFSGKTAQVDEGTVKPLPRSQKTYLSGS) are disordered. Residues N240, M269, Y298, H334, 354-356 (SRG), 395-398 (DGLR), and E434 contribute to the substrate site. Zn(2+) is bound at residue H438. Residue Y461 participates in substrate binding. H502 is a binding site for Zn(2+). [4Fe-4S] cluster is bound by residues C582, C585, and C590.

Belongs to the ThiC family. Homodimer. Requires [4Fe-4S] cluster as cofactor.

The catalysed reaction is 5-amino-1-(5-phospho-beta-D-ribosyl)imidazole + S-adenosyl-L-methionine = 4-amino-2-methyl-5-(phosphooxymethyl)pyrimidine + CO + 5'-deoxyadenosine + formate + L-methionine + 3 H(+). Its pathway is cofactor biosynthesis; thiamine diphosphate biosynthesis. In terms of biological role, catalyzes the synthesis of the hydroxymethylpyrimidine phosphate (HMP-P) moiety of thiamine from aminoimidazole ribotide (AIR) in a radical S-adenosyl-L-methionine (SAM)-dependent reaction. The polypeptide is Phosphomethylpyrimidine synthase (Nitrosospira multiformis (strain ATCC 25196 / NCIMB 11849 / C 71)).